The sequence spans 491 residues: Monocarboxylate transport permease protein (491 aa).

Helical transmembrane passes span glycine 7–alanine 27, tryptophan 55–valine 75, phenylalanine 83–leucine 103, leucine 130–glycine 150, alanine 157–threonine 177, leucine 187–isoleucine 207, leucine 246–alanine 266, alanine 277–glycine 297, tryptophan 322–methionine 342, isoleucine 374–leucine 396, leucine 400–phenylalanine 422, leucine 427–tryptophan 447, and glycine 465–alanine 485.

It belongs to the sodium:solute symporter (SSF) (TC 2.A.21) family.

The protein localises to the cell membrane. With respect to regulation, inhibited by CCCP, but is apparently not affected by the concentration of sodium. Low-affinity transporter of alanine and high-affinity transporter of lactate and pyruvate. Can also transport other monocarboxylates such as propionate, butyrate, alpha-hydroxybutyrate or acetate. May be proton coupled. Required for optimal growth on alanine or pyruvate and ammonia. The polypeptide is Monocarboxylate transport permease protein (Rhizobium johnstonii (strain DSM 114642 / LMG 32736 / 3841) (Rhizobium leguminosarum bv. viciae)).